Here is a 313-residue protein sequence, read N- to C-terminus: Proline-rich protein 3 (313 aa).

A signal peptide spans Met-1–Ala-22. The segment at Pro-27 to Lys-312 is 35 X 5 AA approximate repeats. Repeat copies occupy residues Pro-30 to Lys-34, Ser-35 to Lys-39, Pro-40 to Pro-43, Ser-44 to Thr-48, Pro-49 to Lys-53, Pro-54 to Ser-57, Pro-58 to Thr-62, Pro-64 to Pro-67, Pro-68 to Thr-72, Pro-73 to Lys-77, Pro-82 to Thr-86, Lys-87 to Pro-91, Pro-92 to Thr-96, Pro-97 to Lys-101, Pro-102 to Ser-105, Pro-106 to Thr-110, Lys-111 to Pro-115, Pro-116 to Thr-120, Pro-121 to Lys-125, Pro-126 to Thr-131, Lys-132 to Pro-136, Pro-137 to Thr-141, Pro-142 to Lys-146, Pro-147 to Ser-150, Pro-151 to Lys-155, Ser-157 to Pro-163, Pro-164 to Val-168, Pro-169 to Thr-174, Pro-175 to Val-181, Pro-182 to Lys-186, Ala-187 to Ser-229, Ser-258 to Thr-262, Pro-266 to Asn-270, Pro-298 to Thr-302, and Pro-308 to Lys-312.

The protein belongs to the plant proline-rich protein superfamily. ENOD12 family. In terms of tissue distribution, exclusively expressed in roots, particularly in root hairs-containing regions, and especially in root hairs.

It localises to the secreted. The protein resides in the cell wall. Functionally, may contribute to cell wall structure in root hairs. The polypeptide is Proline-rich protein 3 (PRP3) (Arabidopsis thaliana (Mouse-ear cress)).